Consider the following 1223-residue polypeptide: WD repeat-containing protein 11 (1223 aa).

WD repeat units lie at residues 59 to 108 (KHKA…AQCE) and 111 to 154 (EHVK…KLWK). Residues S205 and S209 each carry the phosphoserine modification. A WD 3 repeat occupies 354 to 393 (KTVRPFSMVCCPVNENAAALIVSDGRVMIWELKSAVCSRN). A phosphoserine mark is found at S401 and S405. WD repeat units lie at residues 470–509 (RMCP…LHKE), 565–604 (NDES…LLRE), 707–744 (GSMG…SRGI), 746–786 (THRS…MVSS), 792–830 (NVTF…TCFR), and 892–939 (ALSN…HSLS).

As to quaternary structure, component of the complex WDR11 composed of C17orf75, FAM91A1 and WDR11; FAM91A1 and WDR11 are required for proper location of the complex. Interacts with GLI3; the interaction associateS EMX1 with GLI3. Interacts with TBC1D23; this interaction may be indirect and recruits TBC1D23 to AP-1-derived vesicles. Interacts (via the N-terminal and the central portion of the protein) with EMX1. In terms of tissue distribution, broadly expressed in various organs including brain, eye,ear, lung, heart, kideny and gonads. Cerebral cortex. The entire developing central nervous system, except for the spinal cord, reveals expression. Expressed in the neuroepithelium, including the diencephalic region that gives rise to hypothalamic neurons. In the adult brain, intense expression is restricted to the olfactory bulb, the olfaction-related piriform cortex, the granule cell layer of the cerebellum, and neurons of the hippocampal formation. The brain demonstrated expression scattered throughout the hypothalamus, sometimes in clusters of neurons.

Its subcellular location is the cytoplasm. The protein localises to the cytoskeleton. The protein resides in the cilium basal body. It is found in the nucleus. It localises to the cilium axoneme. Its subcellular location is the cytoplasmic vesicle. The protein localises to the golgi apparatus. The protein resides in the trans-Golgi network. Involved in the Hedgehog (Hh) signaling pathway, is essential for normal ciliogenesis. Regulates the proteolytic processing of GLI3 and cooperates with the transcription factor EMX1 in the induction of downstream Hh pathway gene expression and gonadotropin-releasing hormone production. WDR11 complex facilitates the tethering of Adaptor protein-1 complex (AP-1)-derived vesicles. WDR11 complex acts together with TBC1D23 to facilitate the golgin-mediated capture of vesicles generated using AP-1. The chain is WD repeat-containing protein 11 (Wdr11) from Mus musculus (Mouse).